Here is a 264-residue protein sequence, read N- to C-terminus: DNA repair protein RecO (264 aa).

It belongs to the RecO family.

Its function is as follows. Involved in DNA repair and RecF pathway recombination. The polypeptide is DNA repair protein RecO (Prosthecochloris aestuarii (strain DSM 271 / SK 413)).